We begin with the raw amino-acid sequence, 84 residues long: Beta-mammal toxin Cn2 (84 aa).

The signal sequence occupies residues 1–16; the sequence is LLIITACLALIGTVWA. In terms of domain architecture, LCN-type CS-alpha/beta spans 17-82; it reads KEGYLVDKNT…VWPLPNKRCS (66 aa). 4 disulfides stabilise this stretch: Cys-28–Cys-81, Cys-32–Cys-57, Cys-41–Cys-62, and Cys-45–Cys-64. Residue Ser-82 is modified to Serine amide.

Belongs to the long (4 C-C) scorpion toxin superfamily. Sodium channel inhibitor family. Beta subfamily. Expressed by the venom gland.

The protein resides in the secreted. Functionally, mammal beta-toxins bind voltage-independently at site-4 of sodium channels (Nav) and shift the activation voltage to more negative potentials. This toxin is active against mammals. The polypeptide is Beta-mammal toxin Cn2 (Centruroides noxius (Mexican scorpion)).